The sequence spans 85 residues: UPF0297 protein LGAS_0422 (85 aa).

The protein belongs to the UPF0297 family.

The polypeptide is UPF0297 protein LGAS_0422 (Lactobacillus gasseri (strain ATCC 33323 / DSM 20243 / BCRC 14619 / CIP 102991 / JCM 1131 / KCTC 3163 / NCIMB 11718 / NCTC 13722 / AM63)).